The following is a 62-amino-acid chain: High-potential iron-sulfur protein (62 aa).

Cys-22, Cys-25, Cys-40, and Cys-55 together coordinate [4Fe-4S] cluster.

It belongs to the high-potential iron-sulfur protein (HiPIP) family. Homodimer.

In terms of biological role, specific class of high-redox-potential 4Fe-4S ferredoxins. Functions in anaerobic electron transport in most purple and in some other photosynthetic bacteria and in at least one genus (Paracoccus) of halophilic, denitrifying bacteria. The sequence is that of High-potential iron-sulfur protein (hip) from Rhodocyclus tenuis (Rhodospirillum tenue).